A 677-amino-acid polypeptide reads, in one-letter code: Probable serine/threonine-protein kinase mkcF (677 aa).

In terms of domain architecture, SH3 spans 1-58 (MLYLVATGDYKGPSENHLSFTKGQRIEFLERTENGFIKGKLDGKVGIFPSSLITIETR). A disordered region spans residues 72 to 244 (TETKDDTGSI…SSSSSSTKRR (173 aa)). Positions 79-94 (GSISSSTSTSTSSLTT) are enriched in low complexity. Positions 105 to 126 (GEQQPSTSTINGQSSSTSPILQ) are enriched in polar residues. The segment covering 127–146 (SNGTTNTTTSSTSNNNIGDN) has biased composition (low complexity). The segment covering 158 to 174 (TTSNHSKSASRLSVASF) has biased composition (polar residues). Positions 175-192 (STTTTATTTTTTTTTATS) are enriched in low complexity. Residues 209–224 (DKKSKDDDKSEKEGLY) show a composition bias toward basic and acidic residues. The segment covering 230–240 (SSSSSSSSSSS) has biased composition (low complexity). Positions 401–646 (IKFTHMVGRG…VDKLMRHPFF (246 aa)) constitute a Protein kinase domain. ATP is bound by residues 407–415 (VGRGQYGKV) and K428. The Proton acceptor role is filled by D519.

Belongs to the protein kinase superfamily. Ser/Thr protein kinase family. STE20 subfamily. It depends on Mg(2+) as a cofactor.

The catalysed reaction is L-seryl-[protein] + ATP = O-phospho-L-seryl-[protein] + ADP + H(+). The enzyme catalyses L-threonyl-[protein] + ATP = O-phospho-L-threonyl-[protein] + ADP + H(+). The sequence is that of Probable serine/threonine-protein kinase mkcF from Dictyostelium discoideum (Social amoeba).